Reading from the N-terminus, the 154-residue chain is Calmodulin-like protein 6 (154 aa).

EF-hand domains are found at residues 1–36 (MDST…LGII), 37–72 (IPED…IMVE), 77–112 (VGEE…LGLK), and 115–150 (KTLE…GRFF). Asp-14, Asp-16, Asp-18, Lys-20, Glu-25, Asp-50, Asn-52, Asp-54, Cys-56, Glu-61, Asp-90, Asn-92, Asp-94, Glu-101, Asp-128, Asp-130, Asp-132, Arg-134, and Glu-139 together coordinate Ca(2+).

This sequence belongs to the calmodulin family.

In terms of biological role, potential calcium sensor. The protein is Calmodulin-like protein 6 (CML6) of Arabidopsis thaliana (Mouse-ear cress).